The sequence spans 376 residues: RCC1 domain-containing protein 1 (376 aa).

The segment at 1–169 (MAEERPGAWF…ARQLELGAEH (169 aa)) is interaction with KDM8. An RCC1 1 repeat occupies 6–56 (PGAWFGFGFCGFGQELGSGRGRQVHSPSPLRAGVDICRVSASWSYTAFVTR). Arg-141 is subject to (3R)-3-hydroxyarginine. RCC1 repeat units lie at residues 176–227 (AGQV…CVSE), 229–317 (GDIY…VVTR), and 318–371 (TGEL…VYAV).

As to quaternary structure, found in a complex with KDM8. Interacts (via N-terminus) with KDM8 (via N-terminus). Specifically hydroxylated (with R stereochemistry) at C-3 of ARG-141 by KDM8.

The protein resides in the chromosome. Functionally, plays a role in transcriptional repression of satellite repeats, possibly by regulating H3K36 methylation levels in centromeric regions together with KDM8. Possibly together with KDM8, is involved in proper mitotic spindle organization and chromosome segregation. Plays a role in regulating alpha-tubulin deacetylation and cytoskeletal microtubule stability, thereby promoting cell migration and TGF-beta-induced epithelial to mesenchymal transition (EMT), potentially through the inhibition of KDM8. The polypeptide is RCC1 domain-containing protein 1 (Homo sapiens (Human)).